Reading from the N-terminus, the 214-residue chain is Adenylate kinase (214 aa).

10–15 lines the ATP pocket; it reads GAGKGT. The segment at 30-59 is NMP; the sequence is STGDMLRAAIKAGTELGNAAKRVMDEGKLV. Residues Thr31, Arg36, 57 to 59, 85 to 88, and Gln92 each bind AMP; these read KLV and GFPR. An LID region spans residues 122-159; sequence GRRVHPASGRVYHLQYNPPQNDGKDDETGEDLVIRADD. ATP contacts are provided by residues Arg123 and 132 to 133; that span reads VY. 2 residues coordinate AMP: Arg156 and Arg167. Lys200 contributes to the ATP binding site.

Belongs to the adenylate kinase family. In terms of assembly, monomer.

The protein resides in the cytoplasm. It catalyses the reaction AMP + ATP = 2 ADP. The protein operates within purine metabolism; AMP biosynthesis via salvage pathway; AMP from ADP: step 1/1. In terms of biological role, catalyzes the reversible transfer of the terminal phosphate group between ATP and AMP. Plays an important role in cellular energy homeostasis and in adenine nucleotide metabolism. This Pseudoalteromonas atlantica (strain T6c / ATCC BAA-1087) protein is Adenylate kinase.